Here is a 254-residue protein sequence, read N- to C-terminus: Major prion protein (254 aa).

An N-terminal signal peptide occupies residues 1–22 (MANLGYWLLALFVATWTDVGLC). The interaction with GRB2, ERI3 and SYN1 stretch occupies residues 23-231 (KKRPKPGGWN…SQAYYDGRRS (209 aa)). Residues 25–107 (RPKPGGWNTG…QWNKPSKPKT (83 aa)) form a disordered region. Repeat copies occupy residues 51–59 (PQGGGTWGQ), 60–67 (PHGGGWGQ), 68–75 (PHGGGWGQ), 76–83 (PHGGGWGQ), and 84–91 (PHGGGWGQ). Residues 51-91 (PQGGGTWGQPHGGGWGQPHGGGWGQPHGGGWGQPHGGGWGQ) are 5 X 8 AA tandem repeats of P-H-G-G-G-W-G-Q. Residues 52–95 (QGGGTWGQPHGGGWGQPHGGGWGQPHGGGWGQPHGGGWGQGGGT) are compositionally biased toward gly residues. 12 residues coordinate Cu(2+): His61, Gly62, Gly63, His69, Gly70, Gly71, His77, Gly78, Gly79, His85, Gly86, and Gly87. Cysteines 179 and 214 form a disulfide. Residues Asn181 and Asn197 are each glycosylated (N-linked (GlcNAc...) asparagine). A lipid anchor (GPI-anchor amidated serine) is attached at Ser231. The propeptide at 232–254 (SAVLFSSPPMILLISFLIFLIVG) is removed in mature form.

Belongs to the prion family. As to quaternary structure, monomer and homodimer. Has a tendency to aggregate into amyloid fibrils containing a cross-beta spine, formed by a steric zipper of superposed beta-strands. Soluble oligomers may represent an intermediate stage on the path to fibril formation. Copper binding may promote oligomerization. Interacts with GRB2, APP, ERI3/PRNPIP and SYN1. Mislocalized cytosolically exposed PrP interacts with MGRN1; this interaction alters MGRN1 subcellular location and causes lysosomal enlargement. Interacts with KIAA1191.

The protein resides in the cell membrane. It localises to the golgi apparatus. In terms of biological role, its primary physiological function is unclear. Has cytoprotective activity against internal or environmental stresses. May play a role in neuronal development and synaptic plasticity. May be required for neuronal myelin sheath maintenance. May play a role in iron uptake and iron homeostasis. Soluble oligomers are toxic to cultured neuroblastoma cells and induce apoptosis (in vitro). Association with GPC1 (via its heparan sulfate chains) targets PRNP to lipid rafts. Also provides Cu(2+) or Zn(2+) for the ascorbate-mediated GPC1 deaminase degradation of its heparan sulfate side chains. This chain is Major prion protein (PRNP), found in Sigmodon hispidus (Hispid cotton rat).